The chain runs to 149 residues: Large ribosomal subunit protein bL9 (149 aa).

The protein belongs to the bacterial ribosomal protein bL9 family.

Its function is as follows. Binds to the 23S rRNA. In Bacillus licheniformis (strain ATCC 14580 / DSM 13 / JCM 2505 / CCUG 7422 / NBRC 12200 / NCIMB 9375 / NCTC 10341 / NRRL NRS-1264 / Gibson 46), this protein is Large ribosomal subunit protein bL9.